The sequence spans 95 residues: 1,2-phenylacetyl-CoA epoxidase, subunit B (95 aa).

As to quaternary structure, homotrimer. Forms a stable heterodimer with PaaC. Probably forms an oligomer with PaaAC.

The protein operates within aromatic compound metabolism; phenylacetate degradation. Functionally, component of 1,2-phenylacetyl-CoA epoxidase multicomponent enzyme system which catalyzes the reduction of phenylacetyl-CoA (PA-CoA) to form 1,2-epoxyphenylacetyl-CoA. The subunit B may play a regulatory role or be directly involved in electron transport. The polypeptide is 1,2-phenylacetyl-CoA epoxidase, subunit B (paaB) (Escherichia coli (strain K12)).